A 206-amino-acid polypeptide reads, in one-letter code: Translation initiation factor IF-3 (206 aa).

This sequence belongs to the IF-3 family. In terms of assembly, monomer.

The protein localises to the cytoplasm. IF-3 binds to the 30S ribosomal subunit and shifts the equilibrium between 70S ribosomes and their 50S and 30S subunits in favor of the free subunits, thus enhancing the availability of 30S subunits on which protein synthesis initiation begins. The protein is Translation initiation factor IF-3 of Chlorobium luteolum (strain DSM 273 / BCRC 81028 / 2530) (Pelodictyon luteolum).